The chain runs to 246 residues: MLLIPAIDLKDGHCVRLKQGDMDQSTIFSEDPAAMARSWVDKGARRLHLVDLNGAFAGKPKNEAAIKKILAEVGSEIDVQLGGGIRDLDTIERYLDAGLRYVIIGTAAVKNPGFLQDACTAFGGHIIVGLDAKDGKVATDGWSKLTGHEVIDLGKKFQDYGVESIIYTDIGRDGMLSGINIEATVRLAQALTIPVIASGGLSNMADIEALCDVEEEGVEGVICGRSIYSGDLDFAAAQARADELNG.

Asp-8 acts as the Proton acceptor in catalysis. Asp-131 (proton donor) is an active-site residue.

Belongs to the HisA/HisF family.

It is found in the cytoplasm. It carries out the reaction 1-(5-phospho-beta-D-ribosyl)-5-[(5-phospho-beta-D-ribosylamino)methylideneamino]imidazole-4-carboxamide = 5-[(5-phospho-1-deoxy-D-ribulos-1-ylimino)methylamino]-1-(5-phospho-beta-D-ribosyl)imidazole-4-carboxamide. It participates in amino-acid biosynthesis; L-histidine biosynthesis; L-histidine from 5-phospho-alpha-D-ribose 1-diphosphate: step 4/9. The sequence is that of 1-(5-phosphoribosyl)-5-[(5-phosphoribosylamino)methylideneamino] imidazole-4-carboxamide isomerase from Polaromonas sp. (strain JS666 / ATCC BAA-500).